A 601-amino-acid chain; its full sequence is Regulatory protein BlaR1 (601 aa).

Topologically, residues 1–8 are extracellular; the sequence is MSSSFFIP. Residues 9-26 traverse the membrane as a helical segment; the sequence is FLVSQILLSLFFSIIILI. Over 27–35 the chain is Cytoplasmic; that stretch reads KKLLRTQIT. Residues 36 to 52 traverse the membrane as a helical segment; the sequence is VGTHYYISVISLLALIA. Residues 53-115 lie on the Extracellular side of the membrane; it reads PFIPFHFLKS…EQSSSKMIDS (63 aa). A helical membrane pass occupies residues 116 to 133; that stretch reads AFFAVWILGVAVMLLATL. At 134 to 322 the chain is on the cytoplasmic side; the sequence is YSNLKIGKIK…QTASPLLKAK (189 aa). Residues 323 to 339 form a helical membrane-spanning segment; the sequence is SALVFTLVLGAILAGTP. Residues 340–601 are Extracellular-facing; the sequence is SVSILAMQKE…KKGIYPSVSR (262 aa). The segment at 354–601 is beta-lactam antibiotic sensor domain; that stretch reads PGTNVEYEDY…KKGIYPSVSR (248 aa). The active-site Acyl-ester intermediate is S402. N6-carboxylysine is present on K405.

It belongs to the peptidase M56 family. Post-translationally, carboxylation occurs on two lysine residues. Carboxylation at 'Lys-405' activates the active site serine residue for acylation. On acylation, the lysine side chain experiences a spontaneous decarboxylation that entraps the sensor in its activated state.

It is found in the cell membrane. Its function is as follows. Integral membrane protein involved in sensing of the presence of beta-lactam antibiotics and transduction of the information to the cytoplasm. Mechanistically, activation of the signal transducer involves acylation of a serine in the C-terminal sensor domain upon binding of the beta-lactam antibiotic. In turn, a conformational change occurs and the signal is transmitted from the cell surface to the cytoplasm. There, the zinc protease domain is activated and initiates autoproteolysis as well as cleavage of the transcriptional repressor BlaI leading to derepression of antibiotic resistance genes. This Bacillus licheniformis protein is Regulatory protein BlaR1 (blaR1).